The sequence spans 636 residues: 1,4-alpha-glucan branching enzyme GlgB (636 aa).

The Nucleophile role is filled by D309. The active-site Proton donor is the E362.

Belongs to the glycosyl hydrolase 13 family. GlgB subfamily. In terms of assembly, monomer.

The catalysed reaction is Transfers a segment of a (1-&gt;4)-alpha-D-glucan chain to a primary hydroxy group in a similar glucan chain.. Its pathway is glycan biosynthesis; glycogen biosynthesis. Functionally, catalyzes the formation of the alpha-1,6-glucosidic linkages in glycogen by scission of a 1,4-alpha-linked oligosaccharide from growing alpha-1,4-glucan chains and the subsequent attachment of the oligosaccharide to the alpha-1,6 position. The chain is 1,4-alpha-glucan branching enzyme GlgB from Aromatoleum aromaticum (strain DSM 19018 / LMG 30748 / EbN1) (Azoarcus sp. (strain EbN1)).